Consider the following 331-residue polypeptide: Vitamin B12 import system permease protein BtuC (331 aa).

Helical transmembrane passes span 20–42, 62–84, 91–113, 117–136, 148–170, 190–209, 240–262, 277–296, and 303–325; these read VMLA…FLSP, LVAA…VLLG, GVLG…LPVM, TVFM…ILVG, MLLV…FYFS, SWHH…WLCL, LAIS…VGLV, FLLP…SDIW, and SAEL…WMLI.

This sequence belongs to the binding-protein-dependent transport system permease family. FecCD subfamily. In terms of assembly, the complex is composed of two ATP-binding proteins (BtuD), two transmembrane proteins (BtuC) and a solute-binding protein (BtuF).

The protein resides in the cell inner membrane. Part of the ABC transporter complex BtuCDF involved in vitamin B12 import. Involved in the translocation of the substrate across the membrane. This chain is Vitamin B12 import system permease protein BtuC, found in Vibrio vulnificus (strain CMCP6).